The chain runs to 119 residues: uncharacterized protein (119 aa).

2 helical membrane-spanning segments follow: residues 19–39 and 68–88; these read FYPS…PSFL and FPWF…PWLL.

Its subcellular location is the membrane. This is an uncharacterized protein from Saccharomyces cerevisiae (strain ATCC 204508 / S288c) (Baker's yeast).